Consider the following 439-residue polypeptide: MNHKLFCVHFLLLILSVCYIQGQDAGGEPAPAEGVAPAPAEGGAPAPAPAEGEAPAPAEGGAPAPAPAEGAEPAPADGGAPAPAPAEGGAPAPAPAEGGAPAPAPAEGGAPAPAEGGAPAPAPAEGEAPAPAPAEGEAPAPAPAEGEAPAPAEGEAPAPAPAEVEAPAPAPAEGEAPAPAPAEGEAPAPAPAEGEAPAPAPAEGEAPAPAPAPAEGEAPAPAPAEGEAPAPAPAEGEAPAPAPAEGEAPAPAPAEGEAPAPAPAEGEAPAPAPAEGEAPAPAPAEGEAPAPAEGEAPAPAPAEGEAPAPAPAEGGAPSPAEGGAPAAAPAEGGAPAPAPAPVEVGPKTEDCKGDPFKRTDCGYPGITEGQCKAKGCCFDSSIVGVKWCFFPRTARAQCLFSPGDREDCGYSSITPMECMKRGCCFDASITGVKWCFHQK.

The first 22 residues, 1 to 22 (MNHKLFCVHFLLLILSVCYIQG), serve as a signal peptide directing secretion. Positions 25–351 (AGGEPAPAEG…VEVGPKTEDC (327 aa)) are disordered. 5 repeat units span residues 26–33 (GGEPAPAE), 34–41 (GVAPAPAE), 42–51 (GGAPAPAPAE), 52–59 (GEAPAPAE), and 60–69 (GGAPAPAPAE). The interval 26 to 343 (GGEPAPAEGV…APAPAPAPVE (318 aa)) is 33 X approximate repeats of G-G(0,1)-[EV](0,1)-A-P-[A-P](1,3)-A-E. The segment covering 26-345 (GGEPAPAEGV…APAPAPVEVG (320 aa)) has biased composition (low complexity). A 6; approximate repeat occupies 70–77 (GAEPAPAD). 9 consecutive repeat copies span residues 78 to 87 (GGAPAPAPAE), 88 to 97 (GGAPAPAPAE), 98 to 107 (GGAPAPAPAE), 108 to 115 (GGAPAPAE), 116 to 125 (GGAPAPAPAE), 126 to 135 (GEAPAPAPAE), 136 to 145 (GEAPAPAPAE), 146 to 153 (GEAPAPAE), and 154 to 163 (GEAPAPAPAE). The stretch at 164–173 (VEAPAPAPAE) is one 16; approximate repeat. A run of 14 repeats spans residues 174-183 (GEAPAPAPAE), 184-193 (GEAPAPAPAE), 194-203 (GEAPAPAPAE), 204-215 (GEAPAPAPAPAE), 216-225 (GEAPAPAPAE), 226-235 (GEAPAPAPAE), 236-245 (GEAPAPAPAE), 246-255 (GEAPAPAPAE), 256-265 (GEAPAPAPAE), 266-275 (GEAPAPAPAE), 276-285 (GEAPAPAPAE), 286-293 (GEAPAPAE), 294-303 (GEAPAPAPAE), and 304-313 (GEAPAPAPAE). One copy of the 31; approximate repeat lies at 314–321 (GGAPSPAE). The 32; approximate repeat unit spans residues 322 to 331 (GGAPAAAPAE). Residues 332 to 343 (GGAPAPAPAPVE) form a 33; approximate repeat. P-type domains are found at residues 349–392 (EDCK…FFPR) and 396–439 (AQCL…FHQK). Disulfide bonds link Cys-351/Cys-377, Cys-361/Cys-376, Cys-371/Cys-388, Cys-398/Cys-424, Cys-408/Cys-423, and Cys-418/Cys-435.

Skin.

The protein resides in the secreted. In terms of biological role, may act as a growth factor in the germinal layer of the epidermis. May also be involved in growth of regenerating glands and in protection of the skin from the external environment. The sequence is that of Skin secretory protein xP2 (p2) from Xenopus laevis (African clawed frog).